A 186-amino-acid polypeptide reads, in one-letter code: UPF0301 protein Sfri_2850 (186 aa).

The protein belongs to the UPF0301 (AlgH) family.

The sequence is that of UPF0301 protein Sfri_2850 from Shewanella frigidimarina (strain NCIMB 400).